Here is a 337-residue protein sequence, read N- to C-terminus: Ketol-acid reductoisomerase (NADP(+)) (337 aa).

The region spanning 3–183 is the KARI N-terminal Rossmann domain; it reads IELLYDADAD…GGARAGVIPT (181 aa). NADP(+) is bound by residues 26-29, Arg49, Ser52, Ser54, and 84-87; these read YGSQ and DTSQ. The active site involves His109. Position 135 (Gly135) interacts with NADP(+). Residues 184 to 329 form the KARI C-terminal knotted domain; the sequence is TFREETETDL…SKLRDLMSWV (146 aa). Mg(2+)-binding residues include Asp192, Glu196, Glu228, and Glu232. A substrate-binding site is contributed by Ser253.

This sequence belongs to the ketol-acid reductoisomerase family. Requires Mg(2+) as cofactor.

The catalysed reaction is (2R)-2,3-dihydroxy-3-methylbutanoate + NADP(+) = (2S)-2-acetolactate + NADPH + H(+). The enzyme catalyses (2R,3R)-2,3-dihydroxy-3-methylpentanoate + NADP(+) = (S)-2-ethyl-2-hydroxy-3-oxobutanoate + NADPH + H(+). It functions in the pathway amino-acid biosynthesis; L-isoleucine biosynthesis; L-isoleucine from 2-oxobutanoate: step 2/4. Its pathway is amino-acid biosynthesis; L-valine biosynthesis; L-valine from pyruvate: step 2/4. Functionally, involved in the biosynthesis of branched-chain amino acids (BCAA). Catalyzes an alkyl-migration followed by a ketol-acid reduction of (S)-2-acetolactate (S2AL) to yield (R)-2,3-dihydroxy-isovalerate. In the isomerase reaction, S2AL is rearranged via a Mg-dependent methyl migration to produce 3-hydroxy-3-methyl-2-ketobutyrate (HMKB). In the reductase reaction, this 2-ketoacid undergoes a metal-dependent reduction by NADPH to yield (R)-2,3-dihydroxy-isovalerate. This Corynebacterium diphtheriae (strain ATCC 700971 / NCTC 13129 / Biotype gravis) protein is Ketol-acid reductoisomerase (NADP(+)).